The following is a 107-amino-acid chain: Nucleoid-associated protein BT_0257 (107 aa).

It belongs to the YbaB/EbfC family. As to quaternary structure, homodimer.

The protein localises to the cytoplasm. The protein resides in the nucleoid. Its function is as follows. Binds to DNA and alters its conformation. May be involved in regulation of gene expression, nucleoid organization and DNA protection. This chain is Nucleoid-associated protein BT_0257, found in Bartonella tribocorum (strain CIP 105476 / IBS 506).